Consider the following 467-residue polypeptide: Ribosomal RNA small subunit methyltransferase F (467 aa).

S-adenosyl-L-methionine contacts are provided by residues 119–125 (ASAPGSK), Glu143, Asp170, and Asp188. Catalysis depends on Cys241, which acts as the Nucleophile.

It belongs to the class I-like SAM-binding methyltransferase superfamily. RsmB/NOP family.

It localises to the cytoplasm. It catalyses the reaction cytidine(1407) in 16S rRNA + S-adenosyl-L-methionine = 5-methylcytidine(1407) in 16S rRNA + S-adenosyl-L-homocysteine + H(+). Functionally, specifically methylates the cytosine at position 1407 (m5C1407) of 16S rRNA. This chain is Ribosomal RNA small subunit methyltransferase F, found in Shewanella amazonensis (strain ATCC BAA-1098 / SB2B).